The sequence spans 712 residues: MPNLPGSSDSTQRHQRNPGTDELVCSSTKPNAAQENADTELAQEKHPQLLSPQTDIPPVCSQPNVSFAQCWDQNFFLDAALTGQNSMTLLGVFDLPNSHMNLTETLSSQLGLEPSQNAFGQGSFDPFVPSSEPSVHSTDNPWPSLPTQLAFQPTNNNTSSLALLGPDPEQLSTLPSSWTGPLDEWPPLDLGQDFAALLSPTYQAFEATPRHTHAHAHQPPRATRHITSQQSPEPYVQVHSTAKIVDRFLVPIAPKPILVERDGPVSGASLPSNPPTALSSTGTRKRKRFNKADRERVNQMRKLGSCFRCRMYKENCDPGLPCKNCMRVQVTRRTFFGPCIRIKWEEVHTFRAGDGDLGQIRATLQTFQWTLGGQVKSIDVQWPFRDDKVKPPILSIECQQFLPKHEHVAEEYSVAGQAYKILLPPWACSNTKAASKKVEAFVRQCQAPLEEEIRHTLNDPILLLTLDEARRYRNETGSKLVATALEIYAGAMMNSRYPASTESDIFGVVDQLHTPYFFDKVPLPPQLTCQIQIMVAQVMLDKQKNALKRLQERALSKNRHKVWYECYLTIFILLATIELVYQVQLRFVKAKQGVSDRNATNLSYVTQYMIEEWEESILTLVGLFHCVMNGGLPFTQSWEDGGENHRLTELDDKALVYVRSLKAEIEQRRGELIALRNRRGRWRYEQPLAAICQLFLPSQDGDKGEGRAAPPS.

Composition is skewed to polar residues over residues 1–10 (MPNLPGSSDS), 25–36 (CSSTKPNAAQEN), 131–145 (SEPSVHSTDNPWPSL), and 269–282 (SLPSNPPTALSSTG). 3 disordered regions span residues 1-43 (MPNL…ELAQ), 115-145 (SQNAFGQGSFDPFVPSSEPSVHSTDNPWPSL), and 264-294 (PVSGASLPSNPPTALSSTGTRKRKRFNKADR). Positions 306 to 339 (CFRCRMYKENCDPGLPCKNCMRVQVTRRTFFGPC) form a DNA-binding region, zn(2)-C6 fungal-type. The stretch at 530-560 (QIQIMVAQVMLDKQKNALKRLQERALSKNRH) forms a coiled coil.

It is found in the nucleus. Its function is as follows. Transcriptional regulator that may regulate the expression of the satratoxin biosynthesis SC3 cluster, one of the 3 clusters involved in the biosynthesis of satratoxins, trichothecene mycotoxins that are associated with human food poisonings. In Stachybotrys chartarum (strain CBS 109288 / IBT 7711) (Toxic black mold), this protein is Satratoxin biosynthesis SC3 cluster transcription factor SAT20.